The following is a 143-amino-acid chain: Small ribosomal subunit protein uS12 (143 aa).

The protein belongs to the universal ribosomal protein uS12 family. Component of the 40S small ribosomal subunit.

The protein resides in the cytoplasm. It localises to the cytosol. Its subcellular location is the rough endoplasmic reticulum. The protein is Small ribosomal subunit protein uS12 (rps23) of Gillichthys mirabilis (Long-jawed mudsucker).